Here is a 482-residue protein sequence, read N- to C-terminus: tRNA sulfurtransferase (482 aa).

In terms of domain architecture, THUMP spans 61–165; that stretch reads LAIRDALTRI…DDRLLLIKGR (105 aa). Residues 183–184, K265, G287, and Q296 contribute to the ATP site; that span reads LI. A disulfide bridge links C344 with C456. The Rhodanese domain occupies 404–482; that stretch reads FGANDVILDI…GFANVKVYRP (79 aa). C456 (cysteine persulfide intermediate) is an active-site residue.

It belongs to the ThiI family.

Its subcellular location is the cytoplasm. It catalyses the reaction [ThiI sulfur-carrier protein]-S-sulfanyl-L-cysteine + a uridine in tRNA + 2 reduced [2Fe-2S]-[ferredoxin] + ATP + H(+) = [ThiI sulfur-carrier protein]-L-cysteine + a 4-thiouridine in tRNA + 2 oxidized [2Fe-2S]-[ferredoxin] + AMP + diphosphate. The enzyme catalyses [ThiS sulfur-carrier protein]-C-terminal Gly-Gly-AMP + S-sulfanyl-L-cysteinyl-[cysteine desulfurase] + AH2 = [ThiS sulfur-carrier protein]-C-terminal-Gly-aminoethanethioate + L-cysteinyl-[cysteine desulfurase] + A + AMP + 2 H(+). It functions in the pathway cofactor biosynthesis; thiamine diphosphate biosynthesis. Functionally, catalyzes the ATP-dependent transfer of a sulfur to tRNA to produce 4-thiouridine in position 8 of tRNAs, which functions as a near-UV photosensor. Also catalyzes the transfer of sulfur to the sulfur carrier protein ThiS, forming ThiS-thiocarboxylate. This is a step in the synthesis of thiazole, in the thiamine biosynthesis pathway. The sulfur is donated as persulfide by IscS. In Salmonella agona (strain SL483), this protein is tRNA sulfurtransferase.